A 154-amino-acid chain; its full sequence is Deoxyuridine 5'-triphosphate nucleotidohydrolase (154 aa).

Substrate contacts are provided by residues arginine 64–glycine 66, asparagine 77, threonine 81–aspartate 83, and lysine 91. A disordered region spans residues leucine 135–leucine 154. The span at glycine 144–leucine 154 shows a compositional bias: gly residues.

This sequence belongs to the dUTPase family. Homotrimer. Mg(2+) serves as cofactor.

The enzyme catalyses dUTP + H2O = dUMP + diphosphate + H(+). It participates in pyrimidine metabolism; dUMP biosynthesis; dUMP from dCTP (dUTP route): step 2/2. Its function is as follows. This enzyme is involved in nucleotide metabolism: it produces dUMP, the immediate precursor of thymidine nucleotides and it decreases the intracellular concentration of dUTP so that uracil cannot be incorporated into DNA. This Mycolicibacterium vanbaalenii (strain DSM 7251 / JCM 13017 / BCRC 16820 / KCTC 9966 / NRRL B-24157 / PYR-1) (Mycobacterium vanbaalenii) protein is Deoxyuridine 5'-triphosphate nucleotidohydrolase.